The primary structure comprises 259 residues: MIQIDALPAFSDNYIWLLQDTAKRRCAVVDPGDAGPVERWLAANPEWVLSDILVTHHHNDHVGGVERLRQLTGARVCGPANERIPGRDLALDEGDRVDVLGVTFQVLAVPGHTLGHIAFFSDQPATPILFSGDTLFAAGCGRMFEGTPEQMQPALARLAALPEQTAVYCAHEYTLSNLRFAKAVEPTNPHVQQRFEDVSRLRAENRISLPSTIGLERLTNPFLRTSETLVKQKADEWKGHSNTTHVAVFAALRSWKDTF.

Histidine 56, histidine 58, aspartate 60, histidine 61, histidine 112, aspartate 133, and histidine 171 together coordinate Zn(2+).

The protein belongs to the metallo-beta-lactamase superfamily. Glyoxalase II family. Monomer. It depends on Zn(2+) as a cofactor.

It catalyses the reaction an S-(2-hydroxyacyl)glutathione + H2O = a 2-hydroxy carboxylate + glutathione + H(+). Its pathway is secondary metabolite metabolism; methylglyoxal degradation; (R)-lactate from methylglyoxal: step 2/2. In terms of biological role, thiolesterase that catalyzes the hydrolysis of S-D-lactoyl-glutathione to form glutathione and D-lactic acid. This chain is Hydroxyacylglutathione hydrolase, found in Pseudomonas putida (strain ATCC 700007 / DSM 6899 / JCM 31910 / BCRC 17059 / LMG 24140 / F1).